The chain runs to 100 residues: Urease subunit gamma (100 aa).

Belongs to the urease gamma subunit family. As to quaternary structure, heterotrimer of UreA (gamma), UreB (beta) and UreC (alpha) subunits. Three heterotrimers associate to form the active enzyme.

The protein localises to the cytoplasm. The catalysed reaction is urea + 2 H2O + H(+) = hydrogencarbonate + 2 NH4(+). The protein operates within nitrogen metabolism; urea degradation; CO(2) and NH(3) from urea (urease route): step 1/1. The sequence is that of Urease subunit gamma from Pseudomonas aeruginosa (strain LESB58).